The primary structure comprises 201 residues: MYKLTTRQQEVLDLIKSHIEDTGYPPTRAEIANQLGFRSANAAEEHLKALARKGAIEMVPGASRGIRLPETIQGIPLIGRVAAGNPILAEQNIEDYCDVPPDFFYPQANYLLKVQGMSMRDAGILDGDLLAVHSTTQVKNGDIVVARIEDEVTVKRFKRERNNATIQLLPENPDFNIIEVDLRDANFSIEGLSVGIIRREL.

Positions 28–48 (RAEIANQLGFRSANAAEEHLK) form a DNA-binding region, H-T-H motif. Active-site for autocatalytic cleavage activity residues include Ser-118 and Lys-155.

This sequence belongs to the peptidase S24 family. In terms of assembly, homodimer.

It carries out the reaction Hydrolysis of Ala-|-Gly bond in repressor LexA.. In terms of biological role, represses a number of genes involved in the response to DNA damage (SOS response), including recA and lexA. In the presence of single-stranded DNA, RecA interacts with LexA causing an autocatalytic cleavage which disrupts the DNA-binding part of LexA, leading to derepression of the SOS regulon and eventually DNA repair. This is LexA repressor from Saccharophagus degradans (strain 2-40 / ATCC 43961 / DSM 17024).